A 327-amino-acid polypeptide reads, in one-letter code: MFDLLALTLAGQVPAEQQGENANLHWRWLTEGLLEMTPKPGYRQAVVLSAGIHGNETAPIELLNQLVKDLLNGDRPLAVRLLVVLGNPAAMRAGKRYLHSDMNRMFGGRYRDFDHSGETARAQQLEQVIAEFFADEGAARFHYDLHTAIRDSRLPRFGILPFQTRPYSAEMLALLDAADLDALVIHSAPGGTFSHFTSEHAGAASCTLELGKARPFGVNDLQQFAAINRALQAAVSGEPLPLRSGSELRIFRVERSLIKRSEEFRLHLSDDTANFTELKQGTLLCDQPGEEYRVQHVSEWILFPNPGVALGLRAGMVLVEAPRSTLY.

Zn(2+) is bound by residues His-53, Glu-56, and His-146. Residue Glu-209 is part of the active site.

The protein belongs to the AspA/AstE family. Succinylglutamate desuccinylase subfamily. Zn(2+) serves as cofactor.

It carries out the reaction N-succinyl-L-glutamate + H2O = L-glutamate + succinate. It participates in amino-acid degradation; L-arginine degradation via AST pathway; L-glutamate and succinate from L-arginine: step 5/5. Functionally, transforms N(2)-succinylglutamate into succinate and glutamate. This Serratia proteamaculans (strain 568) protein is Succinylglutamate desuccinylase.